A 422-amino-acid polypeptide reads, in one-letter code: Ubiquitin-conjugating enzyme E2 Q1 (422 aa).

Met1 bears the N-acetylmethionine mark. Low complexity predominate over residues 1-15; that stretch reads MQQPQPQGQQQPGPG. Disordered stretches follow at residues 1–40 and 174–221; these read MQQP…PGPC and PLPA…EDDG. Positions 16–35 are enriched in gly residues; that stretch reads QQLGGQGAAPGAGGGPGGGP. The span at 185–200 shows a compositional bias: acidic residues; that stretch reads VSSEDEDEEMPEDTED. Positions 212–221 are enriched in basic and acidic residues; it reads AEGKKSEDDG. The UBC core domain occupies 251–415; sequence QATDRLMKEL…VQIHEKNGWY (165 aa). Cys351 acts as the Glycyl thioester intermediate in catalysis.

It belongs to the ubiquitin-conjugating enzyme family. In terms of assembly, monomer and homodimer. Only the homodimer is linked to ubiquitin through thiolester activation. Interacts (via N-terminus) with B4GALT1 (via N-terminal cytoplasmic domain). The interaction is direct. In terms of processing, autoubiquitinated in vitro in the presence of NEDD4L. As to expression, widely expressed.

It localises to the nucleus. Its subcellular location is the cell projection. The protein localises to the filopodium. It is found in the cytoplasm. The protein resides in the cytosol. The enzyme catalyses S-ubiquitinyl-[E1 ubiquitin-activating enzyme]-L-cysteine + [E2 ubiquitin-conjugating enzyme]-L-cysteine = [E1 ubiquitin-activating enzyme]-L-cysteine + S-ubiquitinyl-[E2 ubiquitin-conjugating enzyme]-L-cysteine.. It functions in the pathway protein modification; protein ubiquitination. Catalyzes the covalent attachment of ubiquitin to other proteins. May be involved in hormonal homeostasis in females. Involved in regulation of B4GALT1 cell surface expression, B4GALT1-mediated cell adhesion to laminin and embryoid body formation. This chain is Ubiquitin-conjugating enzyme E2 Q1 (UBE2Q1), found in Homo sapiens (Human).